The following is a 130-amino-acid chain: Protein NrdI (130 aa).

This sequence belongs to the NrdI family.

Functionally, probably involved in ribonucleotide reductase function. In Bartonella bacilliformis (strain ATCC 35685 / KC583 / Herrer 020/F12,63), this protein is Protein NrdI.